The primary structure comprises 413 residues: Histidine--tRNA ligase (413 aa).

Belongs to the class-II aminoacyl-tRNA synthetase family. Homodimer.

It localises to the cytoplasm. The enzyme catalyses tRNA(His) + L-histidine + ATP = L-histidyl-tRNA(His) + AMP + diphosphate + H(+). The sequence is that of Histidine--tRNA ligase from Ehrlichia canis (strain Jake).